Reading from the N-terminus, the 224-residue chain is Putative ribonuclease Z (224 aa).

Asp120 and His184 together coordinate Zn(2+).

Belongs to the RNase Z family. Homodimer. It depends on Zn(2+) as a cofactor.

The enzyme catalyses Endonucleolytic cleavage of RNA, removing extra 3' nucleotides from tRNA precursor, generating 3' termini of tRNAs. A 3'-hydroxy group is left at the tRNA terminus and a 5'-phosphoryl group is left at the trailer molecule.. In terms of biological role, zinc phosphodiesterase, which displays some tRNA 3'-processing endonuclease activity. Probably involved in tRNA maturation, by removing a 3'-trailer from precursor tRNA. In Mycobacterium tuberculosis (strain CDC 1551 / Oshkosh), this protein is Putative ribonuclease Z (rnz).